A 20-amino-acid polypeptide reads, in one-letter code: Cytotoxin drCT-1 (20 aa).

The protein belongs to the three-finger toxin family. Short-chain subfamily. Type IA cytotoxin sub-subfamily. As to quaternary structure, monomer in solution; Homodimer and oligomer in the presence of negatively charged lipids forming a pore with a size ranging between 20 and 30 Angstroms. As to expression, expressed by the venom gland.

It localises to the secreted. Its subcellular location is the target cell membrane. In terms of biological role, this three-finger cytotoxin has antiproliferative, cytotoxic and apoptotic activities. Both in vivo and in vitro experimental results suggests that this protein possess anticancer potential. Also shows neurotoxicity, cardiotoxicity and myotoxicity. This is Cytotoxin drCT-1 from Daboia russelii (Russel's viper).